The primary structure comprises 349 residues: Probable transporter vicT (349 aa).

An EamA domain is found at 25–153 (IAAALLHALA…TALAGVVLVL (129 aa)). 9 helical membrane-spanning segments follow: residues 49–69 (PFTVLQIRLFITVLGCTAYLW), 89–109 (AAGGVFGACGFYLSISYLSLS), 111–131 (ATVLNFIAPLGAIMLTTYWEG), 133–153 (TFAFLDLIACITALAGVVLVL), 179–199 (LKGVVSGITGVAGGIVAFSAM), 215–235 (FGVSICIVTTAFSTIMPEVVW), 244–264 (LLAIIGILGLVMEYLLTAGLG), 269–289 (RVTIMIYSQVLWALFLDWAIW), and 294–314 (NVLTVLGSMVVVASLAVPYLF).

This sequence belongs to the TPT transporter family. SLC35D subfamily.

Its subcellular location is the membrane. Functionally, probable transporter; part of the gene cluster that mediates the biosynthesis of the secondary metabolite victorin, the molecular basis for Victoria blight of oats. The protein is Probable transporter vicT of Bipolaris victoriae (strain FI3) (Victoria blight of oats agent).